Consider the following 903-residue polypeptide: Probable dipeptidyl-aminopeptidase B (903 aa).

A disordered region spans residues 1-83 (MGKFEDDGNS…PLISSGTKTG (83 aa)). Residues 1–90 (MGKFEDDGNS…KTGSSSRLRK (90 aa)) lie on the Cytoplasmic side of the membrane. A compositionally biased stretch (polar residues) spans 10–37 (SESVPLTRQRSESLASQTSTDSGLSIAS). Residues 91 to 111 (IVWLLVLLCVGGWVLSFVLFL) traverse the membrane as a helical; Signal-anchor for type II membrane protein segment. At 112-903 (TQKRPDTAAL…TANPKPQEST (792 aa)) the chain is on the vacuolar side. The tract at residues 121–143 (LSSASTVEIHEPGPATGGTSHGK) is disordered. Residues N268, N349, and N640 are each glycosylated (N-linked (GlcNAc...) asparagine). The active-site Charge relay system is S754. N808 carries an N-linked (GlcNAc...) asparagine glycan. Active-site charge relay system residues include D831 and H864.

It belongs to the peptidase S9B family.

Its subcellular location is the vacuole membrane. The enzyme catalyses Release of an N-terminal dipeptide, Xaa-Yaa-|-Zaa-, from a polypeptide, preferentially when Yaa is Pro, provided Zaa is neither Pro nor hydroxyproline.. Functionally, type IV dipeptidyl-peptidase which removes N-terminal dipeptides sequentially from polypeptides having unsubstituted N-termini provided that the penultimate residue is proline. The polypeptide is Probable dipeptidyl-aminopeptidase B (dapB) (Penicillium rubens (strain ATCC 28089 / DSM 1075 / NRRL 1951 / Wisconsin 54-1255) (Penicillium chrysogenum)).